The following is a 356-amino-acid chain: Mannonate dehydratase 2 (356 aa).

It belongs to the mannonate dehydratase family. Fe(2+) serves as cofactor. It depends on Mn(2+) as a cofactor.

It carries out the reaction D-mannonate = 2-dehydro-3-deoxy-D-gluconate + H2O. The protein operates within carbohydrate metabolism; pentose and glucuronate interconversion. In terms of biological role, catalyzes the dehydration of D-mannonate. This chain is Mannonate dehydratase 2, found in Bacillus licheniformis (strain ATCC 14580 / DSM 13 / JCM 2505 / CCUG 7422 / NBRC 12200 / NCIMB 9375 / NCTC 10341 / NRRL NRS-1264 / Gibson 46).